The sequence spans 46 residues: Light-harvesting protein B-800/850 beta 2 chain (46 aa).

Residues Ala2–Phe25 are Cytoplasmic-facing. A bacteriochlorophyll-binding residues include His18 and His36. Residues Ser26–Phe46 traverse the membrane as a helical segment.

The protein belongs to the antenna complex beta subunit family. As to quaternary structure, the core complex is formed by different alpha and beta chains, binding bacteriochlorophyll molecules, and arranged most probably in tetrameric structures disposed around the reaction center.

Its subcellular location is the cell inner membrane. In terms of biological role, antenna complexes are light-harvesting systems, which transfer the excitation energy to the reaction centers. This chain is Light-harvesting protein B-800/850 beta 2 chain (B2), found in Magnetospirillum molischianum (Rhodospirillum molischianum).